Consider the following 121-residue polypeptide: Small ribosomal subunit protein bS16 (121 aa).

Over residues 85–110 (REARNNPKKAEPGKKAQERAAERAAK) the composition is skewed to basic and acidic residues. The segment at 85–121 (REARNNPKKAEPGKKAQERAAERAAKAAEASEAASAE) is disordered. Over residues 111–121 (AAEASEAASAE) the composition is skewed to low complexity.

It belongs to the bacterial ribosomal protein bS16 family.

The protein is Small ribosomal subunit protein bS16 of Azorhizobium caulinodans (strain ATCC 43989 / DSM 5975 / JCM 20966 / LMG 6465 / NBRC 14845 / NCIMB 13405 / ORS 571).